Reading from the N-terminus, the 3707-residue chain is CUB and sushi domain-containing protein 3 (3707 aa).

The segment at 1–21 (MKGIRKGESRAKESKPWEPGK) is disordered. At 1 to 42 (MKGIRKGESRAKESKPWEPGKRRCAKCGRLDFILMKKMGIKS) the chain is on the cytoplasmic side. Residues 43 to 63 (GFTFWNLVFLLTVSCVKGFIY) traverse the membrane as a helical segment. At 64-3630 (TCGGTLKGLN…NQPHGTNSSS (3567 aa)) the chain is on the extracellular side. Disulfide bonds link Cys-65–Cys-91, Cys-178–Cys-218, Cys-204–Cys-235, and Cys-241–Cys-267. One can recognise a CUB 1 domain in the interval 65–173 (CGGTLKGLNG…HGFKVYYEEL (109 aa)). Residues Asn-73 and Asn-90 are each glycosylated (N-linked (GlcNAc...) asparagine). A Sushi 1 domain is found at 176 to 237 (SSCGNPGVPP…WDFPVPICRA (62 aa)). The CUB 2 domain occupies 241-345 (CGGTMRGSSG…RGFSAPYQGS (105 aa)). 2 N-linked (GlcNAc...) asparagine glycosylation sites follow: Asn-361 and Asn-409. Positions 394-435 (QRVQVTSLRNSGLDPNTSKDGLSPHPADTQSTRRRPRHAEQI) are disordered. The segment covering 396-413 (VQVTSLRNSGLDPNTSKD) has biased composition (polar residues). One can recognise a Sushi 2 domain in the interval 484–545 (NLCPDPGEPE…WSDHRPVCKV (62 aa)). Disulfide bonds link Cys-486–Cys-526, Cys-512–Cys-543, Cys-548–Cys-574, Cys-664–Cys-704, Cys-690–Cys-717, and Cys-721–Cys-747. Residues 548 to 659 (CGSNLQGPSG…VGFKVNYKEI (112 aa)) form the CUB 3 domain. One can recognise a Sushi 3 domain in the interval 662–719 (ESCGDPGTPLYGIREGDGFSNRDVLRFECQFGFELIGEKSIVCQENNQWSANIPICIF). The 109-residue stretch at 721-829 (CLSNFTAPMG…RGFNITYNTF (109 aa)) folds into the CUB 4 domain. N-linked (GlcNAc...) asparagine glycans are attached at residues Asn-724 and Asn-823. Positions 832–893 (NECPDPGIPI…WSGLIPKCGA (62 aa)) constitute a Sushi 4 domain. 3 cysteine pairs are disulfide-bonded: Cys-834-Cys-875, Cys-860-Cys-891, and Cys-895-Cys-921. Residues 895-1003 (CGGHFSAPSG…NGFKIHYESV (109 aa)) form the CUB 5 domain. N-linked (GlcNAc...) asparagine glycosylation occurs at Asn-966. Residues 1008-1065 (YSCLDPGIPVHGRRYGHDFSIGSTVSFSCDSGYRLSHEEPLLCEKNHWWSHPLPTCDA) form the Sushi 5 domain. 3 disulfides stabilise this stretch: Cys-1010/Cys-1050, Cys-1036/Cys-1063, and Cys-1067/Cys-1093. A CUB 6 domain is found at 1067 to 1177 (CGGDVRGPSG…EGFNITFSEY (111 aa)). Residues Asn-1092, Asn-1126, and Asn-1171 are each glycosylated (N-linked (GlcNAc...) asparagine). The region spanning 1180-1239 (EPCEDPGIPQYGSRIGFNFGIGDTLTFSCSSGYRLEGTSEIICLGGGRRVWSAPLPRCVA) is the Sushi 6 domain. 3 cysteine pairs are disulfide-bonded: Cys-1182/Cys-1222, Cys-1208/Cys-1237, and Cys-1241/Cys-1267. A CUB 7 domain is found at 1241 to 1349 (CGASATNNEG…EGFQLVYTSF (109 aa)). The N-linked (GlcNAc...) asparagine glycan is linked to Asn-1280. The 61-residue stretch at 1352-1412 (SHCEDPGIPQ…WDYPLPSCIA (61 aa)) folds into the Sushi 7 domain. 12 disulfide bridges follow: Cys-1354-Cys-1395, Cys-1381-Cys-1410, Cys-1414-Cys-1441, Cys-1528-Cys-1568, Cys-1554-Cys-1584, Cys-1588-Cys-1614, Cys-1701-Cys-1741, Cys-1727-Cys-1758, Cys-1762-Cys-1788, Cys-1878-Cys-1918, Cys-1904-Cys-1935, and Cys-1939-Cys-1965. The 110-residue stretch at 1414 to 1523 (CGGRFKGESS…SGFAIQFSSS (110 aa)) folds into the CUB 8 domain. Residues 1526–1586 (TACRDPGVPM…WQPSPPVCIA (61 aa)) form the Sushi 8 domain. Asn-1536 carries N-linked (GlcNAc...) asparagine glycosylation. The CUB 9 domain maps to 1588–1696 (CGGNLTGSSG…TGFHLEYKAK (109 aa)). N-linked (GlcNAc...) asparagine glycosylation is found at Asn-1591 and Asn-1709. The Sushi 9 domain maps to 1699-1760 (ESCFDPGNIM…WNRALPSCHA (62 aa)). In terms of domain architecture, CUB 10 spans 1762 to 1870 (CGSRSTGSEG…KGFHFVYQAV (109 aa)). Asn-1781 is a glycosylation site (N-linked (GlcNAc...) asparagine). The Sushi 10 domain maps to 1876 to 1937 (TQCSSVPEPR…WNDSLPTCIV (62 aa)). The N-linked (GlcNAc...) asparagine glycan is linked to Asn-1929. The region spanning 1939–2047 (CGGILTKRKG…AGFHLEYTAI (109 aa)) is the CUB 11 domain. Asn-2019 carries an N-linked (GlcNAc...) asparagine glycan. The Sushi 11 domain occupies 2050-2109 (DSCPEPQTPSSGIKIGDRYMVGDVVSFQCDQGYSLQGHSHITCMPGPVRRWNYPIPICLA). 3 cysteine pairs are disulfide-bonded: Cys-2052-Cys-2092, Cys-2078-Cys-2107, and Cys-2111-Cys-2137. One can recognise a CUB 12 domain in the interval 2111-2219 (CGGAMSDFSG…QGFHIVYQAY (109 aa)). An N-linked (GlcNAc...) asparagine glycan is attached at Asn-2155. Positions 2222-2281 (QSCPDPRPFRNGFVIGNDFTVGQTISFECFPGYTLIGNSALTCLHGVSRNWNHPLPRCEA) constitute a Sushi 12 domain. 3 disulfides stabilise this stretch: Cys-2224–Cys-2264, Cys-2250–Cys-2279, and Cys-2283–Cys-2309. A CUB 13 domain is found at 2283-2394 (CGGNITAMNG…LSYHAYQLRV (112 aa)). 3 N-linked (GlcNAc...) asparagine glycosylation sites follow: Asn-2286, Asn-2291, and Asn-2324. The Sushi 13 domain occupies 2393 to 2454 (RVCQPPPPVP…MDGAPPVCQV (62 aa)). Intrachain disulfides connect Cys-2395–Cys-2437, Cys-2423–Cys-2452, and Cys-2456–Cys-2484. Positions 2456–2567 (CPANELRLDS…KGFRIRYIAF (112 aa)) constitute a CUB 14 domain. Residues Asn-2495 and Asn-2537 are each glycosylated (N-linked (GlcNAc...) asparagine). 15 consecutive Sushi domains span residues 2567-2629 (FYCS…ACQA), 2630-2691 (ISCG…RCVV), 2692-2756 (VTCP…YCQI), 2757-2814 (ISCG…RCLA), 2815-2872 (GHCG…SCVP), 2873-2930 (VSCG…MCKV), 2931-2992 (VNCS…ECIM), 2993-3050 (IDCG…HCSG), 3054-3111 (GTCG…ECKA), 3112-3170 (VQCG…NCTI), 3171-3230 (ISCG…TCRA), 3231-3288 (VTCP…QCLP), 3289-3346 (KFCG…HCIE), 3350-3408 (TSCE…ECIP), and 3409-3468 (HSCK…ICEA). Cystine bridges form between Cys-2569–Cys-2610, Cys-2596–Cys-2627, Cys-2632–Cys-2674, Cys-2658–Cys-2689, Cys-2694–Cys-2739, Cys-2725–Cys-2754, Cys-2759–Cys-2799, Cys-2785–Cys-2812, Cys-2817–Cys-2857, Cys-2843–Cys-2870, Cys-2875–Cys-2915, and Cys-2901–Cys-2928. N-linked (GlcNAc...) asparagine glycans are attached at residues Asn-2711 and Asn-2742. N-linked (GlcNAc...) asparagine glycosylation is present at Asn-2862. N-linked (GlcNAc...) asparagine glycans are attached at residues Asn-2932 and Asn-2952. 18 disulfides stabilise this stretch: Cys-2933/Cys-2977, Cys-2963/Cys-2990, Cys-2995/Cys-3035, Cys-3021/Cys-3048, Cys-3056/Cys-3096, Cys-3082/Cys-3109, Cys-3114/Cys-3155, Cys-3141/Cys-3168, Cys-3173/Cys-3215, Cys-3199/Cys-3228, Cys-3233/Cys-3273, Cys-3259/Cys-3286, Cys-3291/Cys-3331, Cys-3317/Cys-3344, Cys-3352/Cys-3393, Cys-3379/Cys-3406, Cys-3411/Cys-3453, and Cys-3438/Cys-3466. A glycan (N-linked (GlcNAc...) asparagine) is linked at Asn-3099. Asn-3158, Asn-3167, Asn-3194, Asn-3208, and Asn-3218 each carry an N-linked (GlcNAc...) asparagine glycan. An N-linked (GlcNAc...) asparagine glycan is attached at Asn-3276. An N-linked (GlcNAc...) asparagine glycan is attached at Asn-3364. N-linked (GlcNAc...) asparagine glycosylation is found at Asn-3522, Asn-3529, Asn-3612, Asn-3618, and Asn-3627. The helical transmembrane segment at 3631-3651 (VAIAILVPFFALIFAGFGFYL) threads the bilayer. Over 3652–3707 (YKQRTAPKTQYTGCSVHENNNGQAAFENPMYDTNAKSVEGKAVRFDPNLNTVCTMV) the chain is Cytoplasmic.

It belongs to the CSMD family. In terms of tissue distribution, weakly expressed in most tissues, except in brain. Expressed at intermediate level in brain, including cerebellum, substantia nigra, thalamus, spinal cord, hippocampus and fetal brain. Also expressed in testis.

The protein localises to the cell membrane. Its function is as follows. Involved in dendrite development. The chain is CUB and sushi domain-containing protein 3 (CSMD3) from Homo sapiens (Human).